Consider the following 294-residue polypeptide: 4-hydroxy-tetrahydrodipicolinate synthase (294 aa).

A pyruvate-binding site is contributed by threonine 45. Catalysis depends on tyrosine 133, which acts as the Proton donor/acceptor. The active-site Schiff-base intermediate with substrate is the lysine 161. Isoleucine 203 provides a ligand contact to pyruvate.

Belongs to the DapA family. As to quaternary structure, homotetramer; dimer of dimers.

The protein resides in the cytoplasm. It carries out the reaction L-aspartate 4-semialdehyde + pyruvate = (2S,4S)-4-hydroxy-2,3,4,5-tetrahydrodipicolinate + H2O + H(+). The protein operates within amino-acid biosynthesis; L-lysine biosynthesis via DAP pathway; (S)-tetrahydrodipicolinate from L-aspartate: step 3/4. Functionally, catalyzes the condensation of (S)-aspartate-beta-semialdehyde [(S)-ASA] and pyruvate to 4-hydroxy-tetrahydrodipicolinate (HTPA). This is 4-hydroxy-tetrahydrodipicolinate synthase from Shewanella sp. (strain ANA-3).